The primary structure comprises 298 residues: Zinc transport system membrane protein TroC (298 aa).

Transmembrane regions (helical) follow at residues 16–36, 41–61, 68–88, 97–117, 144–164, 187–207, 229–249, and 255–275; these read VVLG…FAVL, LFGD…FLLT, ILLL…LMVM, GAQG…LTHV, VLLI…FWKE, FMLT…VGVI, VLCA…SVVS, and LSTG…SIML.

The protein belongs to the ABC-3 integral membrane protein family.

Its subcellular location is the cell membrane. Functionally, part of an ATP-driven transport system TroABCD for zinc. The polypeptide is Zinc transport system membrane protein TroC (troC) (Treponema pallidum (strain Nichols)).